Reading from the N-terminus, the 658-residue chain is Glycogen debranching enzyme (658 aa).

D335 acts as the Nucleophile in catalysis. The active-site Proton donor is E370. Positions 457–468 (NDANGEGNRDGT) are enriched in basic and acidic residues. Residues 457–478 (NDANGEGNRDGTDSNFSNNHGT) are disordered.

Belongs to the glycosyl hydrolase 13 family.

The enzyme catalyses Hydrolysis of (1-&gt;6)-alpha-D-glucosidic linkages to branches with degrees of polymerization of three or four glucose residues in limit dextrin.. It participates in glycan degradation; glycogen degradation. Removes maltotriose and maltotetraose chains that are attached by 1,6-alpha-linkage to the limit dextrin main chain, generating a debranched limit dextrin. This is Glycogen debranching enzyme from Pectobacterium carotovorum subsp. carotovorum (strain PC1).